A 582-amino-acid polypeptide reads, in one-letter code: Glutaredoxin domain-containing cysteine-rich protein CG12206 (582 aa).

Residues 217–227 show a composition bias toward polar residues; the sequence is CETLDSGTGSD. 2 disordered regions span residues 217–244 and 260–300; these read CETL…VRSP and EADH…SCDS. The segment covering 291-300 has biased composition (low complexity); the sequence is SSNSSLSCDS. The 106-residue stretch at 423–528 folds into the Glutaredoxin domain; that stretch reads NVKNYMEKDV…QLLRPYKSIA (106 aa).

This sequence belongs to the GRXCR1 family.

This Drosophila melanogaster (Fruit fly) protein is Glutaredoxin domain-containing cysteine-rich protein CG12206.